Consider the following 515-residue polypeptide: MDEFHRCGKEDSFWQQCFLYPLFFQEDLYAISHDHYLDVSSSSRPMEHLSSNDQLSFLTVKRLIGQIRQQNNSIVLFVNCDPNPLADRKKSFYSESVLEALTLVLEVPFSIWSKYSVEGMNESKSFRSIHSIFPFLEDKFPHSNSILDARIPYYIHPEILVRTFRRWIRDAPSLHPLRSVLYEYRNSPDNLQRSIIVVPRVNTRFFLFLWNYYVCECESILFSRLKRSSHSRSLTHGSLPQRTHFHRKIKHIIIFSRRNSLKSIWSLKDPKIHYVRYGERPIIAIKGAHLLVKKCRYYLLIFRQFYFHLWSEPYRVCSHQLSKNCSSSPGYFLRVRMNPILVRTKMLDELFIADLITDEIDPIVPIVPIIGLLATEKFCDISGRPISKLSWTSLTDDDILDRFDQIWRNLFHYYSGSFDRDGLYRIKYILSLSCAKTLACKHKSTIRVVRKELGPELFKKSFSKEREFYSLRFSSKAAARSQRERIWHSDIPQINPLANSWQKIQDLKIENLFDQ.

The protein belongs to the intron maturase 2 family. MatK subfamily.

The protein resides in the plastid. Its subcellular location is the chloroplast. Functionally, usually encoded in the trnK tRNA gene intron. Probably assists in splicing its own and other chloroplast group II introns. This is Maturase K from Pinus leiophylla (Chihuahua pine).